Here is a 312-residue protein sequence, read N- to C-terminus: Olfactory receptor 2M7 (312 aa).

Residues 1–25 (MAWENQTFNSDFLLLGIFNHSPTHT) lie on the Extracellular side of the membrane. Residue Asn5 is glycosylated (N-linked (GlcNAc...) asparagine). Residues 26 to 49 (FLFFLVLAIFSVAFMGNSIMVLLI) form a helical membrane-spanning segment. Residues 50-57 (YLDTQLHT) are Cytoplasmic-facing. The helical transmembrane segment at 58–79 (PMYFLLSQLSLMDLMLICTTVP) threads the bilayer. The Extracellular portion of the chain corresponds to 80-100 (KMAFNYLSGSKSISMAGCATQ). A disulfide bridge links Cys97 with Cys189. The chain crosses the membrane as a helical span at residues 101–120 (IFFYISLLGSECFLLAVMSY). Over 121 to 139 (DRYTAICHPLRYTNLMRPK) the chain is Cytoplasmic. A helical transmembrane segment spans residues 140 to 158 (ICGLMTAFSWILGSTDGII). Topologically, residues 159 to 195 (DAVATFSFSYCGSREIAHFCCDFPSLLILSCNDTSIF) are extracellular. The helical transmembrane segment at 196–219 (EEVIFICCIVMLVFPVAIIITSYA) threads the bilayer. Residues 220 to 236 (RVILAVIHMGSGEGRRK) lie on the Cytoplasmic side of the membrane. A helical membrane pass occupies residues 237–259 (AFTTCSSHLMVVGMYYGAGLFMC). Residues 260–272 (IQPTSHHSPMQDK) are Extracellular-facing. The helical transmembrane segment at 273 to 292 (MVSVFYTIVTPMLNPLIYSL) threads the bilayer. Topologically, residues 293–311 (RNKEVTRALMKILGKGKSG) are cytoplasmic.

The protein belongs to the G-protein coupled receptor 1 family.

The protein localises to the cell membrane. Functionally, odorant receptor. The polypeptide is Olfactory receptor 2M7 (OR2M7) (Homo sapiens (Human)).